A 432-amino-acid polypeptide reads, in one-letter code: Gamma-glutamyl phosphate reductase (432 aa).

It belongs to the gamma-glutamyl phosphate reductase family.

The protein localises to the cytoplasm. The enzyme catalyses L-glutamate 5-semialdehyde + phosphate + NADP(+) = L-glutamyl 5-phosphate + NADPH + H(+). It participates in amino-acid biosynthesis; L-proline biosynthesis; L-glutamate 5-semialdehyde from L-glutamate: step 2/2. Its function is as follows. Catalyzes the NADPH-dependent reduction of L-glutamate 5-phosphate into L-glutamate 5-semialdehyde and phosphate. The product spontaneously undergoes cyclization to form 1-pyrroline-5-carboxylate. In Methylorubrum extorquens (strain CM4 / NCIMB 13688) (Methylobacterium extorquens), this protein is Gamma-glutamyl phosphate reductase.